Here is a 355-residue protein sequence, read N- to C-terminus: NAD-dependent protein deacylase sirtuin-6 (355 aa).

At Ser-2 the chain carries N-acetylserine. Ser-10 carries the post-translational modification Phosphoserine; by MAPK8. One can recognise a Deacetylase sirtuin-type domain in the interval 27-272; the sequence is PEELERKVWE…TRLMKHLGLE (246 aa). Residue Lys-33 is modified to N6-acetyllysine. The NAD(+) site is built by Ala-53, Thr-57, Phe-64, Arg-65, Trp-71, Gln-113, and His-133. The active-site Proton acceptor is His-133. 3 residues coordinate Zn(2+): Cys-141, Cys-144, and Cys-166. A Glycyl lysine isopeptide (Lys-Gly) (interchain with G-Cter in ubiquitin) cross-link involves residue Lys-170. Position 177 (Cys-177) interacts with Zn(2+). The NAD(+) site is built by Gly-214, Ser-216, Asn-240, Gln-242, and Val-258. A disordered region spans residues 284–355; the sequence is RALPPLPRPP…KRVKAKAVPS (72 aa). Pro residues predominate over residues 287 to 296; it reads PPLPRPPTPK. Thr-294 bears the Phosphothreonine mark. Phosphoserine is present on residues Ser-303 and Ser-330. Positions 343–355 are enriched in basic residues; that stretch reads RPPKRVKAKAVPS.

The protein belongs to the sirtuin family. Class IV subfamily. In terms of assembly, homodimer; binds to nucleosomes and DNA ends as a homodimer. Interacts with RELA; interferes with RELA binding to target DNA. Interacts with SMARCA5; promoting recruitment of SMARCA5/SNF2H to double-strand breaks (DSBs) sites. Interacts with the mTORC2 complex; preventing the ability of SIRT6 to deacetylate FOXO1. Interacts with the CLOCK-BMAL1 complex; recruited by the CLOCK-BMAL1 complex to regulate expression of clock-controlled genes. Interacts with CSNK2A2; preventing CSNK2A2 localization to the nucleus. (Microbial infection) Interacts with Kaposi's sarcoma-associated herpesvirus protein VIRF-1; this interaction prevents SIRT6 deubiquitination by USP10. Zn(2+) serves as cofactor. Post-translationally, acetylated at Lys-33. Deacetylation at Lys-33 by SIRT1 promotes homomultimerization and binding to double-strand breaks (DSBs) sites. In terms of processing, phosphorylation at Ser-10 by MAPK8/JNK1 in response to oxidative stress stimulates the mono-ADP-ribosyltransferase activity on PARP1, leading to PARP1 recruitment to double-strand breaks (DSBs). Monoubiquitinated at Lys-170 by STUB1/CHIP, preventing its degradation by the proteasome. Deubiquitinated by USP10, also preventing its degradation by the proteasome. Post-translationally, sumoylated, leading to specifically decrease ability to deacetylate histone H3 at 'Lys-56' (H3K56ac).

The protein resides in the nucleus. The protein localises to the chromosome. It is found in the telomere. It localises to the endoplasmic reticulum. It catalyses the reaction N(6)-acetyl-L-lysyl-[protein] + NAD(+) + H2O = 2''-O-acetyl-ADP-D-ribose + nicotinamide + L-lysyl-[protein]. The catalysed reaction is N(6)-tetradecanoyl-L-lysyl-[protein] + NAD(+) + H2O = 2''-O-tetradecanoyl-ADP-D-ribose + nicotinamide + L-lysyl-[protein]. It carries out the reaction N(6)-hexadecanoyl-L-lysyl-[protein] + NAD(+) + H2O = 2''-O-hexadecanoyl-ADP-D-ribose + nicotinamide + L-lysyl-[protein]. The enzyme catalyses L-lysyl-[protein] + NAD(+) = N(6)-(ADP-D-ribosyl)-L-lysyl-[protein] + nicotinamide + H(+). It catalyses the reaction L-arginyl-[protein] + NAD(+) = N(omega)-(ADP-D-ribosyl)-L-arginyl-[protein] + nicotinamide + H(+). Compared to the defatty-acylase activity, the protein deacetylase activity is weak in vitro, and requires activation. The histone deacetylase activity is strongly activated upon binding to nucleosomes and chromatin in vivo. Two molecules of SIRT6 associate with the acidic patch of one nucleosome, while the C-terminal disordered region of SIRT6 associates with nucleosomal DNA, leading to efficient histone deacetylation. The protein-lysine deacetylase activity is also activated by long-chain free fatty-acids. The histone deacetylase activity is specifically repressed by long non-coding RNA lncPRESS1, which binds to SIRT6 and prevents chromatin-binding, thereby promoting stem cell pluripotency. Due to its essential role as tumor suppressor and involvement in DNA repair and life span, extensive research is made for the identification of small compound regulators of SIRT6. Nitro-fatty acids (nitro-oleic acid and nitro-conjugated linoleic acid) strongly stimulate the protein-lysine deacetylase activity by forming a covalent Michael adduct formation with Cys-18. Activated by UBCS039 (4-(pyridin-3-yl)-4,5- dihydropyrrolo[1,2-a]quinoxaline). Inhibited by non-selective hydroxamate trichostatin A inhibitor. Deacetylase activity is activated by fluvastatin and quercetin-based compounds. The protein-lysine deacetylase activity, but not the defatty-acylase activity, is specifically activated by MDL-800 and MDL-801 activators in vivo, enhancing the histone deacetylase and tumor suppressor activities. MDL-800 and MDL-801 selectively activate SIRT6 and not other members of the sirtuin family. The binding-mode of MDL-801 is however subject to discussion. Its function is as follows. NAD-dependent protein deacetylase, deacylase and mono-ADP-ribosyltransferase that plays an essential role in DNA damage repair, telomere maintenance, metabolic homeostasis, inflammation, tumorigenesis and aging. Displays protein-lysine deacetylase or defatty-acylase (demyristoylase and depalmitoylase) activity, depending on the context. Acts as a key histone deacetylase by catalyzing deacetylation of histone H3 at 'Lys-9', 'Lys-18' and 'Lys-56' (H3K9ac, H3K18ac and H3K56ac, respectively), suppressing target gene expression of several transcription factors, including NF-kappa-B. Acts as an inhibitor of transcription elongation by mediating deacetylation of H3K9ac and H3K56ac, preventing release of NELFE from chromatin and causing transcriptional pausing. Involved in DNA repair by promoting double-strand break (DSB) repair: acts as a DSB sensor by recognizing and binding DSB sites, leading to (1) recruitment of DNA repair proteins, such as SMARCA5/SNF2H, and (2) deacetylation of histone H3K9ac and H3K56ac. SIRT6 participation to DSB repair is probably involved in extension of life span. Also promotes DNA repair by deacetylating non-histone proteins, such as DDB2 and p53/TP53. Specifically deacetylates H3K18ac at pericentric heterochromatin, thereby maintaining pericentric heterochromatin silencing at centromeres and protecting against genomic instability and cellular senescence. Involved in telomere maintenance by catalyzing deacetylation of histone H3 in telomeric chromatin, regulating telomere position effect and telomere movement in response to DNA damage. Required for embryonic stem cell differentiation by mediating histone deacetylation of H3K9ac. Plays a major role in metabolism by regulating processes such as glycolysis, gluconeogenesis, insulin secretion and lipid metabolism. Inhibits glycolysis via histone deacetylase activity and by acting as a corepressor of the transcription factor HIF1A, thereby controlling the expression of multiple glycolytic genes. Has tumor suppressor activity by repressing glycolysis, thereby inhibiting the Warburg effect. Also regulates glycolysis and tumorigenesis by mediating deacetylation and nuclear export of non-histone proteins, such as isoform M2 of PKM (PKM2). Acts as a negative regulator of gluconeogenesis by mediating deacetylation of non-histone proteins, such as FOXO1 and KAT2A/GCN5. Promotes beta-oxidation of fatty acids during fasting by catalyzing deacetylation of NCOA2, inducing coactivation of PPARA. Acts as a regulator of lipid catabolism in brown adipocytes, both by catalyzing deacetylation of histones and non-histone proteins, such as FOXO1. Also acts as a regulator of circadian rhythms, both by regulating expression of clock-controlled genes involved in lipid and carbohydrate metabolism, and by catalyzing deacetylation of PER2. The defatty-acylase activity is specifically involved in regulation of protein secretion. Has high activity toward long-chain fatty acyl groups and mediates protein-lysine demyristoylation and depalmitoylation of target proteins, such as RRAS2 and TNF, thereby regulating their secretion. Also acts as a mono-ADP-ribosyltransferase by mediating mono-ADP-ribosylation of PARP1, TRIM28/KAP1 or SMARCC2/BAF170. Mono-ADP-ribosyltransferase activity is involved in DNA repair, cellular senescence, repression of LINE-1 retrotransposon elements and regulation of transcription. The sequence is that of NAD-dependent protein deacylase sirtuin-6 from Homo sapiens (Human).